The primary structure comprises 260 residues: MKLSFTIVATAALVASCTFAAPTPASSKLATRYDGDIIDETNAALKDLGLKKRYDGDIIDETNAALKDLGLKKRYDGDIIDETNAALKDLGLKKRYDGDIIDKTNAALKDLGLKKRYDGDIIDETNAALKDLGLKKRYDGDIIDETNAALKDLGLKKRYDGDIIDETNAALKDLGLKKRYDGDIIDETNAALKDLGLKKRYEGDVLDEINGCLTSLGFRKRYEGDVLDELAAAEKEFGVRKRYEGDVLDAVNGCLKSLGL.

The signal sequence occupies residues 1 to 20 (MKLSFTIVATAALVASCTFA).

In terms of processing, rsp1 is processed by the subtilisin-like endoprotease kex2. Cleavage by kex2 generates 11 peptides.

The protein resides in the secreted. Functionally, repetitive secreted protein essential for pathogenic development. Hum3 and rsp1 together are pathogenicity proteins that share an essential function in early stages of the infection. The sequence is that of Repetitive secreted protein 1 from Mycosarcoma maydis (Corn smut fungus).